The primary structure comprises 401 residues: Argininosuccinate synthase (401 aa).

8-16 (AYSGGLDTS) contacts ATP. An L-citrulline-binding site is contributed by Y87. G117 contacts ATP. L-aspartate contacts are provided by T119, N123, and D124. Residue N123 participates in L-citrulline binding. L-citrulline is bound by residues R127, S175, E259, and Y271.

Belongs to the argininosuccinate synthase family. Type 1 subfamily. In terms of assembly, homotetramer.

Its subcellular location is the cytoplasm. It carries out the reaction L-citrulline + L-aspartate + ATP = 2-(N(omega)-L-arginino)succinate + AMP + diphosphate + H(+). It participates in amino-acid biosynthesis; L-arginine biosynthesis; L-arginine from L-ornithine and carbamoyl phosphate: step 2/3. This Arthrobacter sp. (strain FB24) protein is Argininosuccinate synthase.